A 331-amino-acid polypeptide reads, in one-letter code: Cytosolic Fe-S cluster assembly factor CFD1 (331 aa).

25–32 lines the ATP pocket; sequence GKGGVGKS. The [4Fe-4S] cluster site is built by C211 and C214.

This sequence belongs to the Mrp/NBP35 ATP-binding proteins family. NUBP2/CFD1 subfamily. Heterotetramer of 2 NBP35 and 2 CFD1 chains. It depends on [4Fe-4S] cluster as a cofactor.

It is found in the cytoplasm. In terms of biological role, component of the cytosolic iron-sulfur (Fe/S) protein assembly (CIA) machinery. Required for maturation of extramitochondrial Fe-S proteins. The NBP35-CFD1 heterotetramer forms a Fe-S scaffold complex, mediating the de novo assembly of an Fe-S cluster and its transfer to target apoproteins. In Cryptococcus neoformans var. neoformans serotype D (strain B-3501A) (Filobasidiella neoformans), this protein is Cytosolic Fe-S cluster assembly factor CFD1.